Consider the following 95-residue polypeptide: Turripeptide OL184 (95 aa).

In terms of processing, contains 5 disulfide bonds. In terms of tissue distribution, expressed by the venom duct.

It localises to the secreted. Acts as a neurotoxin by inhibiting an ion channel. This Iotyrris olangoensis (Sea snail) protein is Turripeptide OL184.